Here is a 141-residue protein sequence, read N- to C-terminus: Large ribosomal subunit protein uL11 (141 aa).

The protein belongs to the universal ribosomal protein uL11 family. Part of the ribosomal stalk of the 50S ribosomal subunit. Interacts with L10 and the large rRNA to form the base of the stalk. L10 forms an elongated spine to which L12 dimers bind in a sequential fashion forming a multimeric L10(L12)X complex. One or more lysine residues are methylated.

Forms part of the ribosomal stalk which helps the ribosome interact with GTP-bound translation factors. In Limosilactobacillus fermentum (strain NBRC 3956 / LMG 18251) (Lactobacillus fermentum), this protein is Large ribosomal subunit protein uL11.